The following is a 208-amino-acid chain: Uracil phosphoribosyltransferase (208 aa).

5-phospho-alpha-D-ribose 1-diphosphate-binding positions include R78, R103, and 130–138; that span reads DPMLATGGS. Uracil contacts are provided by residues I193 and 198–200; that span reads GDA. Residue D199 coordinates 5-phospho-alpha-D-ribose 1-diphosphate.

The protein belongs to the UPRTase family. The cofactor is Mg(2+).

It carries out the reaction UMP + diphosphate = 5-phospho-alpha-D-ribose 1-diphosphate + uracil. Its pathway is pyrimidine metabolism; UMP biosynthesis via salvage pathway; UMP from uracil: step 1/1. With respect to regulation, allosterically activated by GTP. In terms of biological role, catalyzes the conversion of uracil and 5-phospho-alpha-D-ribose 1-diphosphate (PRPP) to UMP and diphosphate. In Salmonella agona (strain SL483), this protein is Uracil phosphoribosyltransferase.